We begin with the raw amino-acid sequence, 616 residues long: Dihydroxy-acid dehydratase (616 aa).

Asp-81 lines the Mg(2+) pocket. Residue Cys-122 coordinates [2Fe-2S] cluster. Mg(2+)-binding residues include Asp-123 and Lys-124. Lys-124 bears the N6-carboxylysine mark. Cys-195 is a [2Fe-2S] cluster binding site. Glu-491 provides a ligand contact to Mg(2+). Residue Ser-517 is the Proton acceptor of the active site.

Belongs to the IlvD/Edd family. In terms of assembly, homodimer. It depends on [2Fe-2S] cluster as a cofactor. Mg(2+) is required as a cofactor.

The catalysed reaction is (2R)-2,3-dihydroxy-3-methylbutanoate = 3-methyl-2-oxobutanoate + H2O. The enzyme catalyses (2R,3R)-2,3-dihydroxy-3-methylpentanoate = (S)-3-methyl-2-oxopentanoate + H2O. It participates in amino-acid biosynthesis; L-isoleucine biosynthesis; L-isoleucine from 2-oxobutanoate: step 3/4. The protein operates within amino-acid biosynthesis; L-valine biosynthesis; L-valine from pyruvate: step 3/4. Functionally, functions in the biosynthesis of branched-chain amino acids. Catalyzes the dehydration of (2R,3R)-2,3-dihydroxy-3-methylpentanoate (2,3-dihydroxy-3-methylvalerate) into 2-oxo-3-methylpentanoate (2-oxo-3-methylvalerate) and of (2R)-2,3-dihydroxy-3-methylbutanoate (2,3-dihydroxyisovalerate) into 2-oxo-3-methylbutanoate (2-oxoisovalerate), the penultimate precursor to L-isoleucine and L-valine, respectively. In Shewanella loihica (strain ATCC BAA-1088 / PV-4), this protein is Dihydroxy-acid dehydratase.